A 659-amino-acid chain; its full sequence is Exoribonuclease 2 (659 aa).

The region spanning 189-531 (RENLTALHFV…NHRLIKAVLA (343 aa)) is the RNB domain. Positions 576-658 (NAEFEAEVQD…ATRSIVGEIL (83 aa)) constitute an S1 motif domain.

This sequence belongs to the RNR ribonuclease family. RNase II subfamily.

The protein resides in the cytoplasm. It catalyses the reaction Exonucleolytic cleavage in the 3'- to 5'-direction to yield nucleoside 5'-phosphates.. In terms of biological role, involved in mRNA degradation. Hydrolyzes single-stranded polyribonucleotides processively in the 3' to 5' direction. This Haemophilus influenzae (strain PittGG) protein is Exoribonuclease 2.